Here is a 181-residue protein sequence, read N- to C-terminus: FMN reductase (NADH) RutF (181 aa).

This sequence belongs to the non-flavoprotein flavin reductase family. RutF subfamily.

The enzyme catalyses FMNH2 + NAD(+) = FMN + NADH + 2 H(+). Functionally, catalyzes the reduction of FMN to FMNH2 which is used to reduce pyrimidine by RutA via the Rut pathway. This chain is FMN reductase (NADH) RutF, found in Ancylobacter novellus (strain ATCC 8093 / DSM 506 / JCM 20403 / CCM 1077 / IAM 12100 / NBRC 12443 / NCIMB 10456) (Starkeya novella).